Consider the following 156-residue polypeptide: Phosphopantetheine adenylyltransferase (156 aa).

T10 contacts substrate. Residues 10-11 and H18 each bind ATP; that span reads TF. 3 residues coordinate substrate: K42, L74, and R88. Residues 89 to 91, E99, and 124 to 130 contribute to the ATP site; these read GLR and NAFISSS.

Belongs to the bacterial CoaD family. Homohexamer. Requires Mg(2+) as cofactor.

The protein localises to the cytoplasm. The enzyme catalyses (R)-4'-phosphopantetheine + ATP + H(+) = 3'-dephospho-CoA + diphosphate. Its pathway is cofactor biosynthesis; coenzyme A biosynthesis; CoA from (R)-pantothenate: step 4/5. Its function is as follows. Reversibly transfers an adenylyl group from ATP to 4'-phosphopantetheine, yielding dephospho-CoA (dPCoA) and pyrophosphate. The protein is Phosphopantetheine adenylyltransferase of Campylobacter curvus (strain 525.92).